A 314-amino-acid polypeptide reads, in one-letter code: Probable cell division protein WhiA (314 aa).

A DNA-binding region (H-T-H motif) is located at residues 274 to 308 (SLKELGEMVSTGPISKSGVNHRLRKLNDLADKIRN).

It belongs to the WhiA family.

Involved in cell division and chromosome segregation. The chain is Probable cell division protein WhiA from Staphylococcus aureus (strain Mu3 / ATCC 700698).